A 297-amino-acid polypeptide reads, in one-letter code: uncharacterized protein (297 aa).

The N-terminal stretch at 1 to 24 (MRAINKFLITVCIALLASVAVALG) is a signal peptide. The heme site is built by cysteine 58, cysteine 61, histidine 62, cysteine 141, cysteine 144, histidine 145, cysteine 167, cysteine 170, histidine 171, cysteine 223, cysteine 226, histidine 227, cysteine 264, cysteine 267, and histidine 268. A disordered region spans residues 277-297 (TNSVDTWSREGEGAEVQQLPH).

Binds 5 heme groups per subunit.

This is an uncharacterized protein from Archaeoglobus fulgidus (strain ATCC 49558 / DSM 4304 / JCM 9628 / NBRC 100126 / VC-16).